A 1217-amino-acid chain; its full sequence is ATP-dependent helicase/nuclease subunit A (1217 aa).

The 466-residue stretch at 10-475 (VIWTDAQWQS…IDLSQNFRSR (466 aa)) folds into the UvrD-like helicase ATP-binding domain. 31–38 (AAAGSGKT) lines the ATP pocket. The 311-residue stretch at 476–786 (KEVLSTTNYI…RMMTIHSSKG (311 aa)) folds into the UvrD-like helicase C-terminal domain.

This sequence belongs to the helicase family. AddA subfamily. In terms of assembly, heterodimer of AddA and AddB/RexB. Mg(2+) serves as cofactor.

The catalysed reaction is Couples ATP hydrolysis with the unwinding of duplex DNA by translocating in the 3'-5' direction.. The enzyme catalyses ATP + H2O = ADP + phosphate + H(+). In terms of biological role, the heterodimer acts as both an ATP-dependent DNA helicase and an ATP-dependent, dual-direction single-stranded exonuclease. Recognizes the chi site generating a DNA molecule suitable for the initiation of homologous recombination. The AddA nuclease domain is required for chi fragment generation; this subunit has the helicase and 3' -&gt; 5' nuclease activities. The chain is ATP-dependent helicase/nuclease subunit A from Staphylococcus aureus (strain MW2).